The chain runs to 570 residues: MKESPLITLVKRHSETHFANIKYGYYVLIISLVYLIGLALLRAFGRRTPSRSSSAFKNKIIYRLYDIDPAIHLGILFFAVLIPFYYHYSLTTQSTVYLKRLGRLSYALIPLNLFLTLRPNWFLRKNCTYTDFIPFHKWFSRIITVIGLLHGIFFIIKWAIDDNVSLKQKLILKTFNFAGFIISILVLFLLICSIGPMRRYNYRLFYIVHNLVNVAFILLTPIHSRPGVKFPFLLLNCTLLFIHIINRIVFAKSLMILNKNANYSKTNLVHVRLPRAILPDYFEPGSHIRISPYRRINPLYWLLPSHPYTIASLAEDNSIDLIIKETSTAEPGSQIESLRSNPKSFHLDQEKTYTLINSYPPSVPEECYSQGTNIAIICGGSGISFALPLFRHFFNKENVKYLKMIWLIKDYSEYELVLDYLKTNGLTFEKKLSNNKRISVFISGEYTAETRLDEITTNIDDENSEYEMGSFNNEDEDLSISNFNSENADSNDNTPETSHSPTKENGSMIEVKSKHSFTLSNELKSFNNESAQVNQNETWLFSCGPPSLLQLSKKYCNDERINFVCETYGL.

The Extracellular segment spans residues 1–20; that stretch reads MKESPLITLVKRHSETHFAN. The chain crosses the membrane as a helical span at residues 21–41; it reads IKYGYYVLIISLVYLIGLALL. Topologically, residues 42–69 are cytoplasmic; it reads RAFGRRTPSRSSSAFKNKIIYRLYDIDP. The helical transmembrane segment at 70 to 90 threads the bilayer; that stretch reads AIHLGILFFAVLIPFYYHYSL. At 91-141 the chain is on the extracellular side; the sequence is TTQSTVYLKRLGRLSYALIPLNLFLTLRPNWFLRKNCTYTDFIPFHKWFSR. Residues 101-219 form the Ferric oxidoreductase domain; the sequence is LGRLSYALIP…NLVNVAFILL (119 aa). Residues 142 to 162 traverse the membrane as a helical segment; the sequence is IITVIGLLHGIFFIIKWAIDD. Residues 163–176 lie on the Cytoplasmic side of the membrane; that stretch reads NVSLKQKLILKTFN. Residues 177-197 traverse the membrane as a helical segment; the sequence is FAGFIISILVLFLLICSIGPM. The Extracellular portion of the chain corresponds to 198–373; that stretch reads RRYNYRLFYI…PEECYSQGTN (176 aa). The FAD-binding FR-type domain occupies 250 to 388; it reads FAKSLMILNK…GGSGISFALP (139 aa). A helical transmembrane segment spans residues 374-394; it reads IAIICGGSGISFALPLFRHFF. Residues 395-570 lie on the Cytoplasmic side of the membrane; sequence NKENVKYLKM…INFVCETYGL (176 aa). Polar residues predominate over residues 480–505; sequence ISNFNSENADSNDNTPETSHSPTKEN. Residues 480–509 form a disordered region; the sequence is ISNFNSENADSNDNTPETSHSPTKENGSMI.

This sequence belongs to the ferric reductase (FRE) family. AIM14 subfamily. Interacts with ribosomes.

Its subcellular location is the membrane. In terms of biological role, probable cell surface metalloreductase. May be involved in iron or copper homeostasis. This chain is Probable metalloreductase AIM14 (AIM14), found in Saccharomyces cerevisiae (strain ATCC 204508 / S288c) (Baker's yeast).